A 179-amino-acid polypeptide reads, in one-letter code: Large ribosomal subunit protein uL6 (179 aa).

This sequence belongs to the universal ribosomal protein uL6 family. In terms of assembly, part of the 50S ribosomal subunit.

Functionally, this protein binds to the 23S rRNA, and is important in its secondary structure. It is located near the subunit interface in the base of the L7/L12 stalk, and near the tRNA binding site of the peptidyltransferase center. In Parasynechococcus marenigrum (strain WH8102), this protein is Large ribosomal subunit protein uL6.